A 347-amino-acid chain; its full sequence is A-type ATP synthase subunit C (347 aa).

This sequence belongs to the V-ATPase V0D/AC39 subunit family. In terms of assembly, has multiple subunits with at least A(3), B(3), C, D, E, F, H, I and proteolipid K(x).

The protein resides in the cell membrane. In terms of biological role, component of the A-type ATP synthase that produces ATP from ADP in the presence of a proton gradient across the membrane. The polypeptide is A-type ATP synthase subunit C (Haloquadratum walsbyi (strain DSM 16790 / HBSQ001)).